The following is a 379-amino-acid chain: Homoserine O-acetyltransferase (379 aa).

The AB hydrolase-1 domain maps to Asn52–Glu356. Catalysis depends on Ser157, which acts as the Nucleophile. Residue Arg227 coordinates substrate. Catalysis depends on residues Asp320 and His350. Residue Asp351 coordinates substrate.

The protein belongs to the AB hydrolase superfamily. MetX family. Homodimer.

It localises to the cytoplasm. It catalyses the reaction L-homoserine + acetyl-CoA = O-acetyl-L-homoserine + CoA. Its pathway is amino-acid biosynthesis; L-methionine biosynthesis via de novo pathway; O-acetyl-L-homoserine from L-homoserine: step 1/1. Transfers an acetyl group from acetyl-CoA to L-homoserine, forming acetyl-L-homoserine. The protein is Homoserine O-acetyltransferase of Mycobacterium ulcerans (strain Agy99).